The chain runs to 132 residues: Antiholin (132 aa).

The Periplasmic portion of the chain corresponds to 1-16; sequence MMNMIEWTKHVLESDD. Cytoplasmic segments lie at residues 1–61 and 39–58; these read MMNM…ILIK and VIARINPKEKFSSFKMKTGI. A helical transmembrane segment spans residues 17–38; sequence TKLIYWLTLLMVCMIVDTILGI. A helical membrane pass occupies residues 62–80; that stretch reads VSEMIIALLAVPFALPFPA. Residues 81–85 lie on the Periplasmic side of the membrane; it reads GLPLL. A helical transmembrane segment spans residues 86 to 107; it reads YTVYTALCVSEMYSIFGHLRVV. Residues 108-132 are Cytoplasmic-facing; that stretch reads DDKSNFLSIIEGFFKQTYRKDKGDK.

It belongs to the bacteriophage holin family. phi29likevirus holin subfamily. In terms of assembly, homomultimer. Interacts with isoform Antiholin; this interaction blocks the holin homomultimerization and delays host cell lysis.

It localises to the host cell inner membrane. In terms of biological role, accumulates harmlessly in the cytoplasmic membrane until it reaches a critical concentration that triggers the formation of micron-scale pores (holes) causing host cell membrane disruption and endolysin escape into the periplasmic space. Determines the precise timing of host cell lysis. Participates with the endolysin and spanin proteins in the sequential events which lead to the programmed host cell lysis releasing the mature viral particles from the host cell. Its function is as follows. Counteracts the aggregation of the holin molecules and thus of pore formation. The polypeptide is Antiholin (14) (Bacillus phage B103 (Bacteriophage B103)).